The sequence spans 361 residues: Actin maturation protease (361 aa).

Positions 1–75 (MTSPCSFPLK…PPPPPLPSAV (75 aa)) are disordered. Composition is skewed to pro residues over residues 24 to 33 (NIPPPLPLNP) and 52 to 72 (PLPPPPPPPAPPPPPPPPPLP). Residues 134–254 (SCIQEGPQCG…WAVSAGVLIG (121 aa)) form a peptidase C39-like region. Residue cysteine 142 is part of the active site.

Belongs to the ACTMAP family. In terms of assembly, interacts (via N-terminus) with PFN2 isoforms 1/IIa and 2/IIb; the interactions may facilitate efficient cleavage of the acetylated N-terminus of immature actin. Interacts with PFN1.

It is found in the cytoplasm. The catalysed reaction is N-terminal N(alpha)-acetyl-L-methionyl-L-aspartyl-[protein] + H2O = N-terminal L-aspartyl-[protein] + N-acetyl-L-methionine. The enzyme catalyses N-terminal N(alpha)-acetyl-L-methionyl-L-glutamyl-[protein] + H2O = N-terminal L-glutamyl-[protein] + N-acetyl-L-methionine. It carries out the reaction N-terminal N(alpha)-acetyl-L-cysteinyl-L-aspartyl-[protein] + H2O = N-terminal L-aspartyl-[protein] + N-acetyl-L-cysteine. It catalyses the reaction N-terminal N(alpha)-acetyl-L-cysteinyl-L-glutamyl-[protein] + H2O = N-terminal L-glutamyl-[protein] + N-acetyl-L-cysteine. Actin maturation protease that specifically mediates the cleavage of immature acetylated N-terminal actin, thereby contributing to actin maturation. Cleaves N-terminal acetylated methionine of immature cytoplasmic beta- and gamma-actins Actb and Actg1 after translation. Cleaves N-terminal acetylated cysteine of muscle alpha-actins Acta1, Actc1 and Acta2 after canonical removal of N-terminal methionine. The protein is Actin maturation protease of Mus musculus (Mouse).